A 90-amino-acid chain; its full sequence is MTSEQNIQTFRDFLTQYNLVAEQCFNSCVNEFGSRTVSGKEESCANNCLDKFLKMTQRVSQRFQEHQLLNAQANGAAIKVENGGKINKIQ.

The short motif at 24 to 48 (CFNSCVNEFGSRTVSGKEESCANNC) is the Twin CX3C motif element. Disulfide bonds link cysteine 24/cysteine 48 and cysteine 28/cysteine 44.

This sequence belongs to the small Tim family. As to quaternary structure, heterohexamer; composed of 3 copies of tim-9/tin-9.1 and 3 copies of tim-10/tin-10, named soluble 70 kDa complex. The complex associates with the tim-22 component of the TIM22 complex. Interacts with multi-pass transmembrane proteins in transit.

It localises to the mitochondrion inner membrane. Its function is as follows. Mitochondrial intermembrane chaperone that participates in the import and insertion of multi-pass transmembrane proteins into the mitochondrial inner membrane. May also be required for the transfer of beta-barrel precursors from the TOM complex to the sorting and assembly machinery (SAM complex) of the outer membrane. Acts as a chaperone-like protein that protects the hydrophobic precursors from aggregation and guide them through the mitochondrial intermembrane space. The protein is Mitochondrial import inner membrane translocase subunit Tim9 (tin-9.1) of Caenorhabditis elegans.